Reading from the N-terminus, the 205-residue chain is Keratin-associated protein 4-6 (205 aa).

30 repeat units span residues 20-24, 25-29, 30-34, 35-39, 40-44, 45-49, 50-54, 55-59, 60-64, 65-68, 69-73, 74-78, 79-83, 84-88, 89-93, 94-98, 99-103, 104-108, 114-118, 119-123, 124-128, 129-133, 134-138, 139-143, 144-148, 149-153, 154-158, 159-163, 164-168, and 169-173. Residues 20 to 173 form a 30 X 5 AA repeats of C-C-[IRQVEL]-[SPTR]-[STVQRCP] region; sequence CCRPSCCQTT…CCRPCCCLRP (154 aa).

This sequence belongs to the KRTAP type 4 family. Interacts with hair keratins. Expressed in the hair follicles.

In terms of biological role, in the hair cortex, hair keratin intermediate filaments are embedded in an interfilamentous matrix, consisting of hair keratin-associated proteins (KRTAP), which are essential for the formation of a rigid and resistant hair shaft through their extensive disulfide bond cross-linking with abundant cysteine residues of hair keratins. The matrix proteins include the high-sulfur and high-glycine-tyrosine keratins. The protein is Keratin-associated protein 4-6 (KRTAP4-6) of Homo sapiens (Human).